The primary structure comprises 146 residues: Large ribosomal subunit protein uL16 (146 aa).

Belongs to the universal ribosomal protein uL16 family. As to quaternary structure, part of the 50S ribosomal subunit.

Its function is as follows. Binds 23S rRNA and is also seen to make contacts with the A and possibly P site tRNAs. This Thermomicrobium roseum (strain ATCC 27502 / DSM 5159 / P-2) protein is Large ribosomal subunit protein uL16.